Consider the following 768-residue polypeptide: MNTQPHASHTDSNTLMLGRYAERAYLEYAMSVVKGRALPEVSDGQKPVQRRILFAMRDMGLTAGAKPVKSARVVGEILGKYHPHGDSSAYEAMVRMAQDFTLRYPLIDGIGNFGSRDGDGAAAMRYTEARLTPIAELLLSEINQGTVDFMPNYDGAFDEPLHLPARLPMVLLNGASGIAVGMATEIPSHNLNEVTQAAIALLKKPTLETADLMQYIPAPDFAGGGQIITPADELRRIYETGKGSVRVRARYEIEKLARGQWRVIVTELPPNANSAKILAEIEEQTNPKPKAGKKQLNQDRLNTKKLMLDLIDRVRDESDGEHPVRLVFEPKSSRIDTDTFINTLMAQTSLEGNVSMNLVMMGLDNRPAQKNLKTILQEWLDFRIVTVTRRLKFRLNQVEKRLHILEGRLKVFLHIDEVIKVIRESDDPKADLMAVFGLTEIQAEDILEIRLRQLARLEGFKLEKELNELREEQGRLNIFLGDENEKRKLIIKEMQADMKQFGDARRTLVEEAGRAVLTQTAADEPITLILSEKGWIRSRAGHNLDLSQTAFKEGDRLKQTLEGPHCFTRRHPRFIRGRTYSIDAAEIPGGRGDGVPVSSLIELQNGAKPVAMLTGLPEQHYLLSSSGGYGFIAKLGDMVGRVKAGKVVMTADSGETVLPPVAVYASSFINPDCKIIAATSQNRALAFPIGELKIMAKGKGLQIIGLNAGESMTHTAVSSEPEILIESEGRRGAAHKDRLPVALIEAKRGKKGRLLPISGSLKQLSSPK.

One can recognise a Topo IIA-type catalytic domain in the interval 38–521 (LPEVSDGQKP…AGRAVLTQTA (484 aa)). Tyr126 functions as the O-(5'-phospho-DNA)-tyrosine intermediate in the catalytic mechanism.

This sequence belongs to the type II topoisomerase GyrA/ParC subunit family. ParC type 1 subfamily. As to quaternary structure, heterotetramer composed of ParC and ParE.

It is found in the cell membrane. It carries out the reaction ATP-dependent breakage, passage and rejoining of double-stranded DNA.. Topoisomerase IV is essential for chromosome segregation. It relaxes supercoiled DNA. Performs the decatenation events required during the replication of a circular DNA molecule. The protein is DNA topoisomerase 4 subunit A of Neisseria gonorrhoeae.